The sequence spans 319 residues: tRNA N6-adenosine threonylcarbamoyltransferase (319 aa).

Fe cation is bound by residues His110 and His114. Residues 132-136, Asp165, Gly178, Asp182, and Asn271 contribute to the substrate site; that span reads VVSGG. Asp300 serves as a coordination point for Fe cation.

Belongs to the KAE1 / TsaD family. It depends on Fe(2+) as a cofactor.

The protein resides in the cytoplasm. It carries out the reaction L-threonylcarbamoyladenylate + adenosine(37) in tRNA = N(6)-L-threonylcarbamoyladenosine(37) in tRNA + AMP + H(+). In terms of biological role, required for the formation of a threonylcarbamoyl group on adenosine at position 37 (t(6)A37) in tRNAs that read codons beginning with adenine. Is involved in the transfer of the threonylcarbamoyl moiety of threonylcarbamoyl-AMP (TC-AMP) to the N6 group of A37, together with TsaE and TsaB. TsaD likely plays a direct catalytic role in this reaction. The protein is tRNA N6-adenosine threonylcarbamoyltransferase of Mycoplasma capricolum subsp. capricolum (strain California kid / ATCC 27343 / NCTC 10154).